A 970-amino-acid polypeptide reads, in one-letter code: Isoleucine--tRNA ligase (970 aa).

Residues 65–75 carry the 'HIGH' region motif; that stretch reads PYANGHLHIGH. L-isoleucyl-5'-AMP is bound at residue Glu-608. A 'KMSKS' region motif is present at residues 649–653; it reads KMSKS. Lys-652 provides a ligand contact to ATP. Positions 943, 946, 962, and 965 each coordinate Zn(2+).

The protein belongs to the class-I aminoacyl-tRNA synthetase family. IleS type 1 subfamily. As to quaternary structure, monomer. It depends on Zn(2+) as a cofactor.

It is found in the cytoplasm. It catalyses the reaction tRNA(Ile) + L-isoleucine + ATP = L-isoleucyl-tRNA(Ile) + AMP + diphosphate. Functionally, catalyzes the attachment of isoleucine to tRNA(Ile). As IleRS can inadvertently accommodate and process structurally similar amino acids such as valine, to avoid such errors it has two additional distinct tRNA(Ile)-dependent editing activities. One activity is designated as 'pretransfer' editing and involves the hydrolysis of activated Val-AMP. The other activity is designated 'posttransfer' editing and involves deacylation of mischarged Val-tRNA(Ile). In Ruegeria pomeroyi (strain ATCC 700808 / DSM 15171 / DSS-3) (Silicibacter pomeroyi), this protein is Isoleucine--tRNA ligase.